A 519-amino-acid chain; its full sequence is Sorting nexin-2 (519 aa).

Disordered stretches follow at residues 1–20 and 30–103; these read MAAEREPPPLGDGKPTDFEE and STVS…VTPV. Low complexity-rich tracts occupy residues 30-44 and 93-103; these read STVSTLESSPSSPDP and SSETSPAVTPV. Position 97 is a phosphoserine (Ser97). Phosphothreonine is present on residues Thr101 and Thr104. Ser117 and Ser119 each carry phosphoserine. The PX domain maps to 140–269; it reads FDIEIGVSDP…QFLESSELPR (130 aa). Positions 183, 185, 211, and 235 each coordinate a 1,2-diacyl-sn-glycero-3-phospho-(1D-myo-inositol-3-phosphate). The residue at position 185 (Ser185) is a Phosphoserine. An interaction with RhoG region spans residues 260–519; that stretch reads QFLESSELPR…AFLPEAKAIA (260 aa). Ser277 bears the Phosphoserine mark. Residues 278 to 295 are membrane-binding amphipathic helix; the sequence is GAGILRMVNKAADAVNKM. Residues 299–519 enclose the BAR domain; sequence MNESDAWFEE…AFLPEAKAIA (221 aa). Position 469 is an N6-acetyllysine (Lys469).

The protein belongs to the sorting nexin family. As to quaternary structure, predominantly forms heterodimers with BAR domain-containing sorting nexins SNX5, SNX6 and SNX32; can self-associate to form homodimers. The heterodimers are proposed to self-assemble into helical arrays on the membrane to stabilize and expand local membrane curvature underlying endosomal tubule formation. Thought to be a component of the originally described retromer complex (also called SNX-BAR retromer) which is a pentamer containing the heterotrimeric retromer cargo-selective complex (CSC), also decribed as vacuolar protein sorting subcomplex (VPS) and a heterodimeric membrane-deforming subcomplex formed between SNX1 or SNX2 and SNX5 or SNX6 (also called SNX-BAR subcomplex); the respective CSC and SNX-BAR subcomplexes associate with low affinity. Interacts with SNX5, SNX6, SNX32, VPS26A, VPS29, VPS35, FNBP1, KALRN, RHOG (GDP-bound form).

Its subcellular location is the early endosome membrane. The protein resides in the cell projection. The protein localises to the lamellipodium. Involved in several stages of intracellular trafficking. Interacts with membranes containing phosphatidylinositol 3-phosphate (PtdIns(3P)) or phosphatidylinositol 3,5-bisphosphate (PtdIns(3,5)P2). Acts in part as component of the retromer membrane-deforming SNX-BAR subcomplex. The SNX-BAR retromer mediates retrograde transport of cargo proteins from endosomes to the trans-Golgi network (TGN) and is involved in endosome-to-plasma membrane transport for cargo protein recycling. The SNX-BAR subcomplex functions to deform the donor membrane into a tubular profile called endosome-to-TGN transport carrier (ETC). Can sense membrane curvature and has in vitro vesicle-to-membrane remodeling activity. Required for retrograde endosome-to-TGN transport of TGN38. Promotes KALRN- and RHOG-dependent but retromer-independent membrane remodeling such as lamellipodium formation; the function is dependent on GEF activity of KALRN. This chain is Sorting nexin-2 (SNX2), found in Bos taurus (Bovine).